The primary structure comprises 213 residues: tRNA (guanine-N(7)-)-methyltransferase (213 aa).

Residues E38, E63, D91, and D113 each coordinate S-adenosyl-L-methionine. The active site involves D113. Residues K117, D149, and 192–195 (TEYE) each bind substrate.

It belongs to the class I-like SAM-binding methyltransferase superfamily. TrmB family.

It carries out the reaction guanosine(46) in tRNA + S-adenosyl-L-methionine = N(7)-methylguanosine(46) in tRNA + S-adenosyl-L-homocysteine. The protein operates within tRNA modification; N(7)-methylguanine-tRNA biosynthesis. Catalyzes the formation of N(7)-methylguanine at position 46 (m7G46) in tRNA. In Mycoplasmoides gallisepticum (strain R(low / passage 15 / clone 2)) (Mycoplasma gallisepticum), this protein is tRNA (guanine-N(7)-)-methyltransferase.